Consider the following 689-residue polypeptide: Protein asunder (689 aa).

Residues 521–550 (NGARLKLSKAKDQYRLLYRELEQLIQLNAT) adopt a coiled-coil conformation. 2 disordered regions span residues 591–619 (SPERLEPISSVGASGSSNSNSLLKASKRR) and 665–689 (GTKDKDAVTTGASITPNVKEESVRS). Low complexity predominate over residues 599–614 (SSVGASGSSNSNSLLK). Positions 613 to 619 (LKASKRR) match the Nuclear localization signal (NLS) motif.

It belongs to the Integrator subunit 13 family. As to quaternary structure, belongs to the multiprotein complex Integrator, at least composed of IntS1, IntS2, IntS3, IntS4, omd/IntS5, IntS6, defl/IntS7, IntS8, IntS9, IntS10, IntS11, IntS12, asun/IntS13, IntS14 and IntS15. The core complex associates with protein phosphatase 2A subunits mts/PP2A and Pp2A-29B, to form the Integrator-PP2A (INTAC) complex. Phosphorylated.

The protein resides in the nucleus. The protein localises to the cytoplasm. It is found in the perinuclear region. Functionally, component of the integrator complex, a multiprotein complex that terminates RNA polymerase II (Pol II) transcription in the promoter-proximal region of genes. The integrator complex provides a quality checkpoint during transcription elongation by driving premature transcription termination of transcripts that are unfavorably configured for transcriptional elongation: the complex terminates transcription by (1) catalyzing dephosphorylation of the C-terminal domain (CTD) of Pol II subunit Polr2A/Rbp1 and Spt5, and (2) degrading the exiting nascent RNA transcript via endonuclease activity. The integrator complex is also involved in the 3'-end processing of the U7 snRNA, and also the spliceosomal snRNAs U1, U2, U4 and U5. The protein is Protein asunder (asun) of Drosophila sechellia (Fruit fly).